A 416-amino-acid chain; its full sequence is E3 ubiquitin-protein ligase makorin-2 (416 aa).

2 C3H1-type zinc fingers span residues 2–29 (STKQITCRYFMHGVCREGSQCLFSHDLA) and 31–58 (SKPSTICKYYQKGYCAYGTRCRYDHTRP). The segment covering 113 to 122 (NLSGMAERKT) has biased composition (basic and acidic residues). The segment at 113–142 (NLSGMAERKTQPSMVSNPGSCSDPQPSPEM) is disordered. The span at 123–136 (QPSMVSNPGSCSDP) shows a compositional bias: polar residues. S139 bears the Phosphoserine mark. Residues 165–192 (SNEQQLCPYAAAGECRFGDACVYLHGEV) form a C3H1-type 3 zinc finger. A makorin-type Cys-His region spans residues 193–222 (CEICRLQVLHPFDPEQRKAHEKICMLTFEH). The RING-type zinc-finger motif lies at 238–292 (CSICMEVILEKASASERRFGILSNCNHTYCLSCIRQWRCAKQFENPIIKSCPECR). The segment at 321–350 (GMGKKACKYFEQGKGTCPFGSKCLYRHAYP) adopts a C3H1-type 4 zinc-finger fold.

In terms of assembly, interacts with PDLIM2 (via LIM zinc-binding domain). Interacts with RELA. Expressed in sperm, with significantly reduced expression in sperm of patients with oligoasthenoteratozoospermia (at protein level). Widely expressed with expression in testis, ovary, small intestine, colon, peripheral blood leukocytes, fetal liver, bone marrow, thymus, lymph node and spleen.

Its subcellular location is the cytoplasm. It is found in the nucleus. It carries out the reaction S-ubiquitinyl-[E2 ubiquitin-conjugating enzyme]-L-cysteine + [acceptor protein]-L-lysine = [E2 ubiquitin-conjugating enzyme]-L-cysteine + N(6)-ubiquitinyl-[acceptor protein]-L-lysine.. It functions in the pathway protein modification; protein ubiquitination. Its function is as follows. E3 ubiquitin ligase catalyzing the covalent attachment of ubiquitin moieties onto substrate proteins. Promotes the polyubiquitination and proteasome-dependent degradation of RELA/p65, thereby suppressing RELA-mediated NF-kappaB transactivation and negatively regulating inflammatory responses. Plays a role in the regulation of spermiation and in male fertility. The chain is E3 ubiquitin-protein ligase makorin-2 (MKRN2) from Homo sapiens (Human).